Here is a 493-residue protein sequence, read N- to C-terminus: 3-octaprenyl-4-hydroxybenzoate carboxy-lyase (493 aa).

Residue asparagine 172 participates in Mn(2+) binding. Residues 175 to 177 (IYR), 189 to 191 (RWL), and 194 to 195 (RG) each bind prenylated FMN. Residue glutamate 238 participates in Mn(2+) binding. Aspartate 287 functions as the Proton donor in the catalytic mechanism.

Belongs to the UbiD family. In terms of assembly, homohexamer. The cofactor is prenylated FMN. Mn(2+) serves as cofactor.

The protein localises to the cell membrane. The catalysed reaction is a 4-hydroxy-3-(all-trans-polyprenyl)benzoate + H(+) = a 2-(all-trans-polyprenyl)phenol + CO2. It participates in cofactor biosynthesis; ubiquinone biosynthesis. Functionally, catalyzes the decarboxylation of 3-octaprenyl-4-hydroxy benzoate to 2-octaprenylphenol, an intermediate step in ubiquinone biosynthesis. The chain is 3-octaprenyl-4-hydroxybenzoate carboxy-lyase from Shewanella sp. (strain ANA-3).